Reading from the N-terminus, the 268-residue chain is Cell division coordinator CpoB (268 aa).

A signal peptide spans 1–21 (MRMCRRVVTVLALSLPLAAWA). Residues 58–94 (QLFMQLQQMQDQLSRQQGIIEELQNDVSRMKQENLER) adopt a coiled-coil conformation. The segment at 104-146 (SGAAPAATPDNSSGGGASNAAPDAAAGAAAQQPAGSSQPGDPA) is disordered. The span at 121 to 143 (SNAAPDAAAGAAAQQPAGSSQPG) shows a compositional bias: low complexity. TPR repeat units follow at residues 149-181 (KLYY…YPNS), 185-218 (GNAQ…YPKH), and 222-255 (PDSL…YPGT).

This sequence belongs to the CpoB family.

The protein localises to the periplasm. In terms of biological role, mediates coordination of peptidoglycan synthesis and outer membrane constriction during cell division. The sequence is that of Cell division coordinator CpoB from Pseudomonas putida (strain ATCC 47054 / DSM 6125 / CFBP 8728 / NCIMB 11950 / KT2440).